The primary structure comprises 416 residues: Na(+)/H(+) antiporter NhaA (416 aa).

The next 11 membrane-spanning stretches (helical) occupy residues Gly39–Ala59, Leu82–Ile102, Leu119–Val139, Gly146–Gly166, Val175–Phe195, Gly198–Leu218, Ala234–Leu254, Pro281–Gly301, Leu315–Ala335, Trp353–Ile373, and Gly390–Gln410.

Belongs to the NhaA Na(+)/H(+) (TC 2.A.33) antiporter family.

The protein resides in the cell inner membrane. The catalysed reaction is Na(+)(in) + 2 H(+)(out) = Na(+)(out) + 2 H(+)(in). Na(+)/H(+) antiporter that extrudes sodium in exchange for external protons. This is Na(+)/H(+) antiporter NhaA from Acidovorax sp. (strain JS42).